We begin with the raw amino-acid sequence, 56 residues long: Large ribosomal subunit protein bL33 (56 aa).

The protein belongs to the bacterial ribosomal protein bL33 family.

The polypeptide is Large ribosomal subunit protein bL33 (rpmG) (Treponema pallidum (strain Nichols)).